We begin with the raw amino-acid sequence, 675 residues long: DNA ligase (675 aa).

NAD(+) is bound by residues 35-39 (DSEYD), 84-85 (SL), and glutamate 115. Residue lysine 117 is the N6-AMP-lysine intermediate of the active site. The NAD(+) site is built by arginine 138, glutamate 175, lysine 292, and lysine 316. 4 residues coordinate Zn(2+): cysteine 410, cysteine 413, cysteine 428, and cysteine 434. Positions 593-675 (QIVQPLLGRT…RNFLDDTSFP (83 aa)) constitute a BRCT domain.

The protein belongs to the NAD-dependent DNA ligase family. LigA subfamily. Requires Mg(2+) as cofactor. Mn(2+) serves as cofactor.

The catalysed reaction is NAD(+) + (deoxyribonucleotide)n-3'-hydroxyl + 5'-phospho-(deoxyribonucleotide)m = (deoxyribonucleotide)n+m + AMP + beta-nicotinamide D-nucleotide.. Its function is as follows. DNA ligase that catalyzes the formation of phosphodiester linkages between 5'-phosphoryl and 3'-hydroxyl groups in double-stranded DNA using NAD as a coenzyme and as the energy source for the reaction. It is essential for DNA replication and repair of damaged DNA. This chain is DNA ligase, found in Nitrosococcus oceani (strain ATCC 19707 / BCRC 17464 / JCM 30415 / NCIMB 11848 / C-107).